Reading from the N-terminus, the 125-residue chain is Classical arabinogalactan protein 27 (125 aa).

The N-terminal stretch at 1-21 is a signal peptide; that stretch reads MASSILLTLITFIFLSSLSLS. Over residues 20 to 36 the composition is skewed to low complexity; it reads LSSPTTNTIPSSQTISP. The segment at 20 to 95 is disordered; it reads LSSPTTNTIP…ASPPASSLAS (76 aa). The span at 53 to 66 shows a compositional bias: polar residues; sequence AVSSTQTIPSSSTL. Low complexity predominate over residues 77–95; it reads DPDPAFAPSASPPASSLAS. Ser98 is lipidated: GPI-anchor amidated serine. Residues 99 to 125 constitute a propeptide, removed in mature form; that stretch reads QAPGVFIYFVFAAVYCFSLRLLAVSAI.

This sequence belongs to the classical AGP family. O-glycosylated on the hydroxyproline residues.

The protein resides in the cell membrane. Proteoglycan that seems to be implicated in diverse developmental roles such as differentiation, cell-cell recognition, embryogenesis and programmed cell death. The chain is Classical arabinogalactan protein 27 (AGP27) from Arabidopsis thaliana (Mouse-ear cress).